Consider the following 208-residue polypeptide: Uracil phosphoribosyltransferase (208 aa).

5-phospho-alpha-D-ribose 1-diphosphate-binding positions include R78, R103, and 130-138; that span reads DPMLATGGS. Uracil is bound by residues I193 and 198 to 200; that span reads GDA. Position 199 (D199) interacts with 5-phospho-alpha-D-ribose 1-diphosphate.

Belongs to the UPRTase family. The cofactor is Mg(2+).

It carries out the reaction UMP + diphosphate = 5-phospho-alpha-D-ribose 1-diphosphate + uracil. Its pathway is pyrimidine metabolism; UMP biosynthesis via salvage pathway; UMP from uracil: step 1/1. With respect to regulation, allosterically activated by GTP. Catalyzes the conversion of uracil and 5-phospho-alpha-D-ribose 1-diphosphate (PRPP) to UMP and diphosphate. This is Uracil phosphoribosyltransferase from Shewanella halifaxensis (strain HAW-EB4).